The chain runs to 522 residues: Peptide methionine sulfoxide reductase MsrA/MsrB (522 aa).

One can recognise a Thioredoxin domain in the interval 17–174 (LALGACSPKI…ALALIRNPNA (158 aa)). A disulfide bond links Cys68 and Cys71. A peptide methionine sulfoxide reductase A region spans residues 199 to 354 (RTIYLAGGCF…PNGYCHIDIR (156 aa)). Residue Cys207 is part of the active site. One can recognise a MsrB domain in the interval 383–506 (DAELKRTLTE…NGASLKFIPL (124 aa)). Residues Cys440 and Cys495 are joined by a disulfide bond. Catalysis depends on Cys495, which acts as the Nucleophile.

This sequence in the N-terminal section; belongs to the thioredoxin family. In the central section; belongs to the MsrA Met sulfoxide reductase family. It in the C-terminal section; belongs to the MsrB Met sulfoxide reductase family.

It carries out the reaction L-methionyl-[protein] + [thioredoxin]-disulfide + H2O = L-methionyl-(S)-S-oxide-[protein] + [thioredoxin]-dithiol. The catalysed reaction is [thioredoxin]-disulfide + L-methionine + H2O = L-methionine (S)-S-oxide + [thioredoxin]-dithiol. The enzyme catalyses L-methionyl-[protein] + [thioredoxin]-disulfide + H2O = L-methionyl-(R)-S-oxide-[protein] + [thioredoxin]-dithiol. Has an important function as a repair enzyme for proteins that have been inactivated by oxidation. Catalyzes the reversible oxidation-reduction of methionine sulfoxide in proteins to methionine. The sequence is that of Peptide methionine sulfoxide reductase MsrA/MsrB (msrAB) from Neisseria gonorrhoeae.